The chain runs to 246 residues: Phosphate import ATP-binding protein PstB (246 aa).

In terms of domain architecture, ABC transporter spans 3–241 (AKTTNLNLFY…PKQEKTKAYL (239 aa)). 35–42 (GASGCGKS) contacts ATP.

Belongs to the ABC transporter superfamily. Phosphate importer (TC 3.A.1.7) family. The complex is composed of two ATP-binding proteins (PstB), two transmembrane proteins (PstC and PstA) and a solute-binding protein (PstS).

Its subcellular location is the cell inner membrane. The catalysed reaction is phosphate(out) + ATP + H2O = ADP + 2 phosphate(in) + H(+). Its function is as follows. Part of the ABC transporter complex PstSACB involved in phosphate import. Responsible for energy coupling to the transport system. This Campylobacter jejuni subsp. jejuni serotype O:2 (strain ATCC 700819 / NCTC 11168) protein is Phosphate import ATP-binding protein PstB.